A 906-amino-acid polypeptide reads, in one-letter code: Protein translocase subunit SecA (906 aa).

ATP is bound by residues Q86, 104–108 (GEGKT), and D499. The tract at residues 862-887 (KPVVSRIDPKDRNPDDPTSWGRVSRN) is disordered. The Zn(2+) site is built by C890, C892, C901, and H902.

This sequence belongs to the SecA family. In terms of assembly, monomer and homodimer. Part of the essential Sec protein translocation apparatus which comprises SecA, SecYEG and auxiliary proteins SecDF-YajC and YidC. The cofactor is Zn(2+).

It is found in the cell inner membrane. It localises to the cytoplasm. The enzyme catalyses ATP + H2O + cellular proteinSide 1 = ADP + phosphate + cellular proteinSide 2.. In terms of biological role, part of the Sec protein translocase complex. Interacts with the SecYEG preprotein conducting channel. Has a central role in coupling the hydrolysis of ATP to the transfer of proteins into and across the cell membrane, serving both as a receptor for the preprotein-SecB complex and as an ATP-driven molecular motor driving the stepwise translocation of polypeptide chains across the membrane. This Rickettsia peacockii (strain Rustic) protein is Protein translocase subunit SecA.